We begin with the raw amino-acid sequence, 219 residues long: MPVGVPKVPFLNPNPDPEPDSVEEELDSMEEKATWVDLYNRLYRQRWLFLGKDLEEEVANNIVGLMIHLNIEDPFWTQTLYINCLGGLIIPGLALYDTIGFVEPDVKTICLGIAASMASVVLVGGTVTERCAFPNARVMIHQPRAKEFDDRFSDLNLEGHLFLQLRNCVTQIYIHRTNKPAWVIIADLERDTFMSATEARTYGIIDGVYAFEEEYEEWS.

The interval 1–22 (MPVGVPKVPFLNPNPDPEPDSV) is disordered. Serine 116 functions as the Nucleophile in the catalytic mechanism. Residue histidine 141 is part of the active site.

Belongs to the peptidase S14 family. Component of the chloroplastic Clp protease core complex.

It is found in the plastid. The protein localises to the chloroplast stroma. The enzyme catalyses Hydrolysis of proteins to small peptides in the presence of ATP and magnesium. alpha-casein is the usual test substrate. In the absence of ATP, only oligopeptides shorter than five residues are hydrolyzed (such as succinyl-Leu-Tyr-|-NHMec, and Leu-Tyr-Leu-|-Tyr-Trp, in which cleavage of the -Tyr-|-Leu- and -Tyr-|-Trp bonds also occurs).. Cleaves peptides in various proteins in a process that requires ATP hydrolysis. Has a chymotrypsin-like activity. Plays a major role in the degradation of misfolded proteins. This is ATP-dependent Clp protease proteolytic subunit from Pelargonium hortorum (Common geranium).